The following is a 190-amino-acid chain: Protein GrpE (190 aa).

The segment at 1 to 42 (MNEKDNQTTSEPENEQEIIDVNDSGEQPEENETEQPQEEAVE) is disordered. A compositionally biased stretch (acidic residues) spans 26–42 (EQPEENETEQPQEEAVE).

Belongs to the GrpE family. In terms of assembly, homodimer.

Its subcellular location is the cytoplasm. In terms of biological role, participates actively in the response to hyperosmotic and heat shock by preventing the aggregation of stress-denatured proteins, in association with DnaK and GrpE. It is the nucleotide exchange factor for DnaK and may function as a thermosensor. Unfolded proteins bind initially to DnaJ; upon interaction with the DnaJ-bound protein, DnaK hydrolyzes its bound ATP, resulting in the formation of a stable complex. GrpE releases ADP from DnaK; ATP binding to DnaK triggers the release of the substrate protein, thus completing the reaction cycle. Several rounds of ATP-dependent interactions between DnaJ, DnaK and GrpE are required for fully efficient folding. The chain is Protein GrpE from Oceanobacillus iheyensis (strain DSM 14371 / CIP 107618 / JCM 11309 / KCTC 3954 / HTE831).